Here is a 267-residue protein sequence, read N- to C-terminus: PHD finger protein ALFIN-LIKE 7 (267 aa).

Residues Thr162–Asp207 are disordered. Low complexity predominate over residues Ser165–Pro188. The span at Asp196 to Asp207 shows a compositional bias: acidic residues. A PHD-type zinc finger spans residues Ala211–Lys263.

It belongs to the Alfin family. In terms of assembly, interacts with H3K4me3 and to a lesser extent with H3K4me2.

It is found in the nucleus. Functionally, histone-binding component that specifically recognizes H3 tails trimethylated on 'Lys-4' (H3K4me3), which mark transcription start sites of virtually all active genes. The polypeptide is PHD finger protein ALFIN-LIKE 7 (Oryza sativa subsp. indica (Rice)).